Reading from the N-terminus, the 640-residue chain is Guanylate-binding protein 4 (640 aa).

The segment at 1 to 325 (MGERTLHAAV…DAINSGAVPC (325 aa)) is GTPase domain (Globular). The GB1/RHD3-type G domain maps to 50-292 (SQPVVVVAIV…FCSYIFTHAK (243 aa)). Residues 60-67 (GLYRTGKS), 82-84 (LGS), and 112-116 (DTEGL) each bind GTP. The stretch at 499 to 612 (GEKAIAAERA…EQLRLLKILD (114 aa)) forms a coiled coil.

This sequence belongs to the TRAFAC class dynamin-like GTPase superfamily. GB1/RHD3 GTPase family. GB1 subfamily. Heterodimer with other family members, including GBP1, GBP2 and GBP5. Dimerization regulates subcellular location. Interacts with IRF7; preventing interaction between TRAF6 and IRF7, resulting in impaired TRAF6-mediated IRF7 ubiquitination. (Microbial infection) Ubiquitinated by S.flexneri IpaH9.8, leading to its degradation by the proteasome, thereby preventing its ability to promote host defense against bacterial infection.

The protein localises to the golgi apparatus membrane. It is found in the cytoplasm. Its subcellular location is the nucleus. It localises to the perinuclear region. It carries out the reaction GTP + H2O = GDP + phosphate + H(+). Its function is as follows. Interferon (IFN)-inducible GTPase that plays important roles in innate immunity against a diverse range of bacterial, viral and protozoan pathogens. Negatively regulates the antiviral response by inhibiting activation of IRF7 transcription factor. The chain is Guanylate-binding protein 4 from Homo sapiens (Human).